Consider the following 194-residue polypeptide: Putative manganese efflux pump MntP (194 aa).

6 consecutive transmembrane segments (helical) span residues 8 to 28, 36 to 56, 61 to 81, 109 to 129, 138 to 158, and 172 to 192; these read LLAIGLAMDCLAVSIASGIIL, MLIMAFFFGLFQAIMPLLGWL, FSHLIESVDHWIAFAILAFLG, MAVATSIDALAVGVSFAFLGI, PAGIIGFVSFFMSLIGLIFGI, and LWGGIILILIGTKILIEHLFF.

It belongs to the MntP (TC 9.B.29) family.

It is found in the cell inner membrane. Functionally, probably functions as a manganese efflux pump. The sequence is that of Putative manganese efflux pump MntP from Bacteroides fragilis (strain ATCC 25285 / DSM 2151 / CCUG 4856 / JCM 11019 / LMG 10263 / NCTC 9343 / Onslow / VPI 2553 / EN-2).